The primary structure comprises 232 residues: CMP-N,N'-diacetyllegionaminic acid synthase (232 aa).

This sequence belongs to the CMP-NeuNAc synthase family.

It catalyses the reaction N,N-diacetyllegionaminate + CTP = CMP-N,N-diacetyllegionaminate + diphosphate. In terms of biological role, involved in biosynthesis of legionaminic acid (5,7-diamino-3,5,7,9-tetradeoxy-D-glycero-D-galacto-non-2-ulosonic acid)(Leg), a sialic acid-like derivative that is incorporated into virulence-associated cell surface glycoconjugates such as lipopolysaccharide (LPS) which could be a key determinant in the ability of L.pneumophila to inhibit the fusion of phagosomes with lysosomes. LPS contains a majority alpha2,4-linked homomer of legionaminic acid. Catalyzes the conversion of N,N'-diacetyllegionaminic acid (Leg5Ac7Ac) and CTP into CMP-N,N'-diacetyllegionaminic acid (CMP-Leg5Ac7Ac). The sequence is that of CMP-N,N'-diacetyllegionaminic acid synthase (neuA) from Legionella pneumophila subsp. pneumophila (strain Philadelphia 1 / ATCC 33152 / DSM 7513).